The chain runs to 452 residues: Cholesterol 7-desaturase nvd 2 (452 aa).

2 consecutive transmembrane segments (helical) span residues 6–26 and 32–52; these read LIRI…MGLC and FPVM…ALVM. Residues 107 to 212 enclose the Rieske domain; that stretch reads WFKVADSTWI…CCEVDGMAYL (106 aa). The [2Fe-2S] cluster site is built by C148, H150, C169, and H172.

This sequence belongs to the cholesterol 7-desaturase family. [2Fe-2S] cluster serves as cofactor.

The protein resides in the membrane. It catalyses the reaction cholesterol + NADPH + O2 + H(+) = 7-dehydrocholesterol + NADP(+) + 2 H2O. It carries out the reaction cholesterol + NADH + O2 + H(+) = 7-dehydrocholesterol + NAD(+) + 2 H2O. It functions in the pathway steroid hormone biosynthesis; dafachronic acid biosynthesis. In terms of biological role, catalyzes the production of 7-dehydrocholesterol (7-DHC or cholesta-5,7-dien-3beta-ol) by inserting a double bond (desaturating) at the C7-C8 single bond of cholesterol. Essential regulator of steroid biosynthesis as this reaction is the first step in the synthesis of the steroid hormone Delta(7)-dafachronic acid. The polypeptide is Cholesterol 7-desaturase nvd 2 (Ciona intestinalis (Transparent sea squirt)).